Here is a 211-residue protein sequence, read N- to C-terminus: Interleukin-6 (211 aa).

A signal peptide spans 1 to 29 (MNSLSTSAFSPVAFSLGLLLVMATAFPTP). An intrachain disulfide couples C71 to C77. S80 carries the phosphoserine modification. An intrachain disulfide couples C100 to C110.

It belongs to the IL-6 superfamily. As to quaternary structure, component of a hexamer of two molecules each of IL6, IL6R and IL6ST; first binds to IL6R to associate with the signaling subunit IL6ST. Interacts with IL6R (via the N-terminal ectodomain); this interaction may be affected by IL6R-binding with SORL1, hence decreasing IL6 cis signaling. Interacts with SORL1 (via the N-terminal ectodomain); this interaction leads to IL6 internalization and lysosomal degradation. May form a trimeric complex with the soluble SORL1 ectodomain and soluble IL6R receptor; this interaction might stabilize circulating IL6, hence promoting IL6 trans signaling.

It localises to the secreted. Cytokine with a wide variety of biological functions in immunity, tissue regeneration, and metabolism. Binds to IL6R, then the complex associates to the signaling subunit IL6ST/gp130 to trigger the intracellular IL6-signaling pathway. The interaction with the membrane-bound IL6R and IL6ST stimulates 'classic signaling', whereas the binding of IL6 and soluble IL6R to IL6ST stimulates 'trans-signaling'. Alternatively, 'cluster signaling' occurs when membrane-bound IL6:IL6R complexes on transmitter cells activate IL6ST receptors on neighboring receiver cells. Functionally, IL6 is a potent inducer of the acute phase response. Rapid production of IL6 contributes to host defense during infection and tissue injury, but excessive IL6 synthesis is involved in disease pathology. In the innate immune response, is synthesized by myeloid cells, such as macrophages and dendritic cells, upon recognition of pathogens through toll-like receptors (TLRs) at the site of infection or tissue injury. In the adaptive immune response, is required for the differentiation of B cells into immunoglobulin-secreting cells. Plays a major role in the differentiation of CD4(+) T cell subsets. Essential factor for the development of T follicular helper (Tfh) cells that are required for the induction of germinal-center formation. Required to drive naive CD4(+) T cells to the Th17 lineage. Also required for proliferation of myeloma cells and the survival of plasmablast cells. In terms of biological role, acts as an essential factor in bone homeostasis and on vessels directly or indirectly by induction of VEGF, resulting in increased angiogenesis activity and vascular permeability. Induces, through 'trans-signaling' and synergistically with IL1B and TNF, the production of VEGF. Involved in metabolic controls, is discharged into the bloodstream after muscle contraction increasing lipolysis and improving insulin resistance. 'Trans-signaling' in central nervous system also regulates energy and glucose homeostasis. Mediates, through GLP-1, crosstalk between insulin-sensitive tissues, intestinal L cells and pancreatic islets to adapt to changes in insulin demand. Also acts as a myokine. Plays a protective role during liver injury, being required for maintenance of tissue regeneration. Also has a pivotal role in iron metabolism by regulating HAMP/hepcidin expression upon inflammation or bacterial infection. Through activation of IL6ST-YAP-NOTCH pathway, induces inflammation-induced epithelial regeneration. The chain is Interleukin-6 (IL6) from Camelus bactrianus (Bactrian camel).